Here is a 156-residue protein sequence, read N- to C-terminus: Ribosomal RNA large subunit methyltransferase H (156 aa).

S-adenosyl-L-methionine contacts are provided by residues Leu-73, Gly-104, and 123-128 (LSKLTL).

This sequence belongs to the RNA methyltransferase RlmH family. Homodimer.

The protein resides in the cytoplasm. It carries out the reaction pseudouridine(1915) in 23S rRNA + S-adenosyl-L-methionine = N(3)-methylpseudouridine(1915) in 23S rRNA + S-adenosyl-L-homocysteine + H(+). Its function is as follows. Specifically methylates the pseudouridine at position 1915 (m3Psi1915) in 23S rRNA. This chain is Ribosomal RNA large subunit methyltransferase H, found in Idiomarina loihiensis (strain ATCC BAA-735 / DSM 15497 / L2-TR).